Here is a 335-residue protein sequence, read N- to C-terminus: tRNA N6-adenosine threonylcarbamoyltransferase (335 aa).

Fe cation is bound by residues His-111 and His-115. Residues 133-137 (LISGG), Asp-166, Gly-179, and Asn-276 each bind substrate. Asp-301 is a binding site for Fe cation.

It belongs to the KAE1 / TsaD family. Fe(2+) is required as a cofactor.

It localises to the cytoplasm. The enzyme catalyses L-threonylcarbamoyladenylate + adenosine(37) in tRNA = N(6)-L-threonylcarbamoyladenosine(37) in tRNA + AMP + H(+). Required for the formation of a threonylcarbamoyl group on adenosine at position 37 (t(6)A37) in tRNAs that read codons beginning with adenine. Is involved in the transfer of the threonylcarbamoyl moiety of threonylcarbamoyl-AMP (TC-AMP) to the N6 group of A37, together with TsaE and TsaB. TsaD likely plays a direct catalytic role in this reaction. The sequence is that of tRNA N6-adenosine threonylcarbamoyltransferase from Wolbachia sp. subsp. Drosophila simulans (strain wRi).